The following is a 542-amino-acid chain: MVSPRPVGLMLLLIIARVSRGAGIGFRFASYIDNYMVLQKEPSGAVIWGFGTAGATVTVTLCQGQETIMKKVTSVKGPSNTWMVVLDPMKPGGPFEVMAQQTLETTNLTLRVHDVLFGDVWLCSGQSNMQMTVLQIFNASKELSDTAAYQSVRIFSVSLTQAEEELADLDGVDLSWSKPTAGNLGHGNFTYMSAVCWLFGRYLYDTLQYPIGLVSSSWGGTPIEVWSSRRALKACGVPNTRDERVLQPEIKPMRNGCESKESSCPFRRFVPCDPVAGPATHSVLWNAMIHPLQNMTLKGVVWYQGENNANYNRDLYACMFPALIAGWRQTFHSGCQGQTERFFPFGFVQLSSYLLMNSSDYGFPEIRWHQTADFGSVPNPKMPNTFMAVAMDLCDRDSPFGSIHPRDKQTVAYRLHLGARAVAYGEKNLTFQGPLPKKIELLARNELLNLTYDQEIQVQRKDNKTFEISCCSDHQCKWLPAPVNTFSTQTLILDLSACLGTVDAVRYAWTTWPCEYKQCAVYHTSSVLPAPPFTARITHRGI.

The first 23 residues, 1–23 (MVSPRPVGLMLLLIIARVSRGAG), serve as a signal peptide directing secretion. 8 N-linked (GlcNAc...) asparagine glycosylation sites follow: Asn107, Asn138, Asn188, Asn294, Asn357, Asn428, Asn449, and Asn463.

As to quaternary structure, disulfide-linked heterodimer of a small subunit and a large subunit. In terms of processing, the two subunits are derived from a single precursor by proteolytic cleavage. Post-translationally, glycosylated. Widely expressed.

It localises to the lysosome. The catalysed reaction is N-acetyl-9-O-acetylneuraminate + H2O = N-acetylneuraminate + acetate + H(+). It catalyses the reaction an Ac-O-9-sialoglycoconjugate + H2O = a sialoglycoconjugate + acetate + H(+). Its activity is regulated as follows. Inhibited by diisopropyl fluorophosphate and diethyl-P-nitrophenyl phosphate. Catalyzes the removal of O-acetyl ester groups from position 9 of the free diacetylated sialate N-acetyl-9-O-acetylneuraminate (Neu5,9Ac2) in the cytosol and of the diacetylated sialate residues of sialylglycoconjugates in the lysosomes. Together with the sialate-O-acetyltransferase they regulate the balance of acetylated sialoglycoconjugates, key players in various processes such as cell-cell interactions, host-pathogen recognition, and tumor antigenicity. The protein is Sialate O-acetylesterase (Siae) of Rattus norvegicus (Rat).